The primary structure comprises 394 residues: NADH dehydrogenase [ubiquinone] iron-sulfur protein 2 (394 aa).

Residues M1 to G16 are compositionally biased toward polar residues. Residues M1–A22 form a disordered region.

The protein belongs to the complex I 49 kDa subunit family. Complex I is composed of about 45 different subunits. This is a component of the iron-sulfur (IP) fragment of the enzyme.

It localises to the mitochondrion. The enzyme catalyses a ubiquinone + NADH + 5 H(+)(in) = a ubiquinol + NAD(+) + 4 H(+)(out). Its function is as follows. Core subunit of the mitochondrial membrane respiratory chain NADH dehydrogenase (Complex I) that is believed to belong to the minimal assembly required for catalysis. Complex I functions in the transfer of electrons from NADH to the respiratory chain. The immediate electron acceptor for the enzyme is believed to be ubiquinone. Component of the iron-sulfur (IP) fragment of the enzyme. This is NADH dehydrogenase [ubiquinone] iron-sulfur protein 2 (NAD7) from Nicotiana sylvestris (Wood tobacco).